Reading from the N-terminus, the 551-residue chain is Structure-specific endonuclease subunit MUS81 (551 aa).

A compositionally biased stretch (basic and acidic residues) spans 84–93 (HRTSGGDHAP). The disordered stretch occupies residues 84-130 (HRTSGGDHAPDSPSGENSPAPQGRLAEVQDSSMPVPAQPKAGGSGSY). Ser-95 and Ser-101 each carry phosphoserine. The segment at 125–244 (GGSGSYWPAR…PGEETAVPGA (120 aa)) is interaction with BLM. Positions 131 to 230 (WPARHSGARV…GLSLLNVGIG (100 aa)) are winged helix domain (WHD); critical for endonuclease activity. The 103-residue stretch at 270–372 (LLCVDIGETR…RRVYLVEEHG (103 aa)) folds into the ERCC4 domain. Catalysis depends on residues Asp-274, Glu-277, and Asp-307. The Mg(2+) site is built by Asp-274, Glu-277, Asp-307, Glu-333, and Arg-334. The interval 471–545 (VREVFARQLM…LSRTLSQLYC (75 aa)) is helix-hairpin-helix (2HhH); involved in DNA recognition and bending.

Belongs to the XPF family. As to quaternary structure, part of the heterodimeric DNA structure-specific endonuclease complex MUS81-EME1. Part of the heterodimeric DNA structure-specific endonuclease complex MUS81-EME2. Interacts with BLM; may stimulate the endonuclease activity of MUS81. Interacts with SLX4/BTBD12; this interaction is direct and links the MUS81-EME1 complex to SLX4, which may coordinate the action of the structure-specific endonuclease during DNA repair. Interacts with DCLRE1B/Apollo. Interacts with RECQL5; this interaction stimulates mitotic DNA synthesis. Interacts with CHEK2. Requires Mg(2+) as cofactor. In terms of tissue distribution, widely expressed.

Its subcellular location is the nucleus. The protein resides in the nucleolus. Catalytic subunit of two functionally distinct, structure-specific, heterodimeric DNA endonucleases MUS81-EME1 and MUS81-EME2 that are involved in the maintenance of genome stability. Both endonucleases have essentially the same substrate specificity though MUS81-EME2 is more active than its MUS81-EME1 counterpart. Both cleave 3'-flaps and nicked Holliday junctions, and exhibit limited endonuclease activity with 5' flaps and nicked double-stranded DNAs. MUS81-EME2 which is active during the replication of DNA is more specifically involved in replication fork processing. Replication forks frequently encounter obstacles to their passage, including DNA base lesions, DNA interstrand cross-links, difficult-to-replicate sequences, transcription bubbles, or tightly bound proteins. One mechanism for the restart of a stalled replication fork involves nucleolytic cleavage mediated by the MUS81-EME2 endonuclease. By acting upon the stalled fork, MUS81-EME2 generates a DNA double-strand break (DSB) that can be repaired by homologous recombination, leading to the restoration of an active fork. MUS81-EME2 could also function in telomere maintenance. MUS81-EME1, on the other hand, is active later in the cell cycle and functions in the resolution of mitotic recombination intermediates including the Holliday junctions, the four-way DNA intermediates that form during homologous recombination. This is Structure-specific endonuclease subunit MUS81 from Homo sapiens (Human).